A 291-amino-acid polypeptide reads, in one-letter code: Shikimate dehydrogenase (NADP(+)) (291 aa).

Shikimate-binding positions include 22–24 and Thr-69; that span reads SLS. Lys-73 serves as the catalytic Proton acceptor. Positions 94 and 110 each coordinate shikimate. NADP(+) is bound by residues 131-135 and Leu-226; that span reads GSGGA. Tyr-228 contributes to the shikimate binding site. Residue Gly-249 coordinates NADP(+).

Belongs to the shikimate dehydrogenase family. Homodimer.

The catalysed reaction is shikimate + NADP(+) = 3-dehydroshikimate + NADPH + H(+). The protein operates within metabolic intermediate biosynthesis; chorismate biosynthesis; chorismate from D-erythrose 4-phosphate and phosphoenolpyruvate: step 4/7. Functionally, involved in the biosynthesis of the chorismate, which leads to the biosynthesis of aromatic amino acids. Catalyzes the reversible NADPH linked reduction of 3-dehydroshikimate (DHSA) to yield shikimate (SA). This Synechococcus sp. (strain JA-3-3Ab) (Cyanobacteria bacterium Yellowstone A-Prime) protein is Shikimate dehydrogenase (NADP(+)).